A 157-amino-acid chain; its full sequence is GTP-dependent dephospho-CoA kinase (157 aa).

GTP-binding residues include Asp40, Asp59, Lys61, Glu107, and Asp128.

It belongs to the GTP-dependent DPCK family.

It catalyses the reaction 3'-dephospho-CoA + GTP = GDP + CoA + H(+). The protein operates within cofactor biosynthesis; coenzyme A biosynthesis. In terms of biological role, catalyzes the GTP-dependent phosphorylation of the 3'-hydroxyl group of dephosphocoenzyme A to form coenzyme A (CoA). This is GTP-dependent dephospho-CoA kinase from Desulfurococcus amylolyticus (strain DSM 18924 / JCM 16383 / VKM B-2413 / 1221n) (Desulfurococcus kamchatkensis).